Reading from the N-terminus, the 271-residue chain is Short-chain dehydrogenase ptmH (271 aa).

Positions 8, 34, 40, 56, 84, 148, 152, 181, and 183 each coordinate NADP(+). Tyrosine 148 (proton acceptor) is an active-site residue. Catalysis depends on lysine 152, which acts as the Lowers pKa of active site Tyr.

This sequence belongs to the short-chain dehydrogenases/reductases (SDR) family.

It participates in secondary metabolite biosynthesis. Its function is as follows. Short-chain dehydrogenase; part of the gene cluster that mediates the biosynthesis of the indole diterpenes penitrems. The geranylgeranyl diphosphate (GGPP) synthase ptmG catalyzes the first step in penitrem biosynthesis via conversion of farnesyl pyrophosphate and isopentyl pyrophosphate into geranylgeranyl pyrophosphate (GGPP). Condensation of indole-3-glycerol phosphate with GGPP by the prenyl transferase ptmC then forms 3-geranylgeranylindole (3-GGI). Epoxidation by the FAD-dependent monooxygenase ptmM leads to a epoxidized-GGI that is substrate of the terpene cyclase ptmB for cyclization to yield paspaline. Paspaline is subsequently converted to 13-desoxypaxilline by the cytochrome P450 monooxygenase ptmP, the latter being then converted to paxilline by the cytochrome P450 monooxygenase ptmQ. Paxilline is converted to beta-paxitriol via C-10 ketoreduction by the short-chain dehydrogenase ptmH which can be monoprenylated at the C-20 by the indole diterpene prenyltransferase ptmD. A two-step elimination (acetylation and elimination) process performed by the O-acetyltransferase ptmV and ptmI leads to the production of the prenylated form of penijanthine. The FAD-linked oxidoreductase ptmO then converts the prenylated form of penijanthine into PC-M5 which is in turn transformed into PC-M4 by the aromatic dimethylallyltransferase ptmE. Five sequential oxidative transformations performed by the cytochrome P450 monooxygenases ptmK, ptmU, ptmL, ptmN and ptmJ yield the various penitrem compounds. PtmK, ptmU and ptmM are involved in the formation of the key bicyclic ring of penitrem C via the formation of the intermediates secopenitrem D and penitrem D. PtmL catalyzes the epoxidation of penitrem D and C to yield penitrem B and F, respectively. PtmJ catalyzes the last benzylic hydroxylation to convert penitrem B to prenitrem E and penitrem F to penitrem A. This chain is Short-chain dehydrogenase ptmH, found in Penicillium ochrochloron.